The chain runs to 290 residues: UPF0761 membrane protein YihY (290 aa).

A run of 6 helical transmembrane segments spans residues 44-64, 104-124, 140-160, 183-203, 210-230, and 244-264; these read LLSL…FPMF, VGAC…DSAL, FAVY…SLAI, IFPL…VPTI, AIVG…GFAL, and VLAV…IVLL.

Belongs to the UPF0761 family.

Its subcellular location is the cell inner membrane. The sequence is that of UPF0761 membrane protein YihY from Escherichia fergusonii (strain ATCC 35469 / DSM 13698 / CCUG 18766 / IAM 14443 / JCM 21226 / LMG 7866 / NBRC 102419 / NCTC 12128 / CDC 0568-73).